Consider the following 371-residue polypeptide: Capsular polysaccharide phosphotransferase cps12A (371 aa).

This sequence belongs to the stealth family.

In terms of biological role, part of a capsular polysaccharide synthesis locus. This is Capsular polysaccharide phosphotransferase cps12A (cps12A) from Actinobacillus pleuropneumoniae (Haemophilus pleuropneumoniae).